We begin with the raw amino-acid sequence, 276 residues long: Undecaprenyl-diphosphatase (276 aa).

The next 6 membrane-spanning stretches (helical) occupy residues 43 to 63 (RAMA…VWEF), 85 to 105 (GNLL…ADLI), 109 to 129 (LFNP…MLWA), 183 to 203 (AATE…AVYS), 214 to 234 (GDLP…MIAV), and 249 to 269 (FAWY…FGWV).

The protein belongs to the UppP family.

It localises to the cell inner membrane. The catalysed reaction is di-trans,octa-cis-undecaprenyl diphosphate + H2O = di-trans,octa-cis-undecaprenyl phosphate + phosphate + H(+). Its function is as follows. Catalyzes the dephosphorylation of undecaprenyl diphosphate (UPP). Confers resistance to bacitracin. The sequence is that of Undecaprenyl-diphosphatase from Pseudomonas putida (strain ATCC 700007 / DSM 6899 / JCM 31910 / BCRC 17059 / LMG 24140 / F1).